We begin with the raw amino-acid sequence, 311 residues long: tRNA dimethylallyltransferase (311 aa).

An ATP-binding site is contributed by 10–17; sequence GPTAVGKS. 12-17 lines the substrate pocket; that stretch reads TAVGKS. Positions 35 to 38 are interaction with substrate tRNA; it reads DSMQ.

The protein belongs to the IPP transferase family. Monomer. Mg(2+) is required as a cofactor.

It catalyses the reaction adenosine(37) in tRNA + dimethylallyl diphosphate = N(6)-dimethylallyladenosine(37) in tRNA + diphosphate. Catalyzes the transfer of a dimethylallyl group onto the adenine at position 37 in tRNAs that read codons beginning with uridine, leading to the formation of N6-(dimethylallyl)adenosine (i(6)A). The polypeptide is tRNA dimethylallyltransferase (Carboxydothermus hydrogenoformans (strain ATCC BAA-161 / DSM 6008 / Z-2901)).